Here is a 466-residue protein sequence, read N- to C-terminus: Keratin, type II cytoskeletal 7 (466 aa).

Ser2 carries the N-acetylserine modification. Ser2 and Ser7 each carry phosphoserine. Residues 2-91 (SLHFGSQVFS…DPSIQQVRQE (90 aa)) are head. O-linked (GlcNAc) serine glycosylation occurs at Ser12. Arg20 carries the post-translational modification Dimethylated arginine; alternate. At Arg20 the chain carries Omega-N-methylarginine; alternate. Ser54, Ser72, and Ser84 each carry phosphoserine. The interval 91-127 (EEREQIKTLNNKFASFIDKVRFLEQQNKLLETKWALL) is coil 1A. Positions 92-404 (EREQIKTLNN…KLLEGEESRL (313 aa)) constitute an IF rod domain. Thr98 carries the post-translational modification Phosphothreonine. The segment at 128–145 (QEQKSAKSNRLPGIFEAQ) is linker 1. A Glycyl lysine isopeptide (Lys-Gly) (interchain with G-Cter in SUMO2) cross-link involves residue Lys131. The segment at 146–237 (IAGLRKQLEA…TLYEQELKEL (92 aa)) is coil 1B. The residue at position 180 (Lys180) is an N6-acetyllysine. The tract at residues 238 to 261 (QSEVSDTSVVLSMDNNRSLDLDSI) is linker 12. Position 255 is a phosphoserine (Ser255). The interval 262-400 (IAEVKAQYEE…ATYRKLLEGE (139 aa)) is coil 2. Glycyl lysine isopeptide (Lys-Gly) (interchain with G-Cter in SUMO2) cross-links involve residues Lys266 and Lys287. A Phosphothreonine modification is found at Thr290. Glycyl lysine isopeptide (Lys-Gly) (interchain with G-Cter in SUMO2) cross-links involve residues Lys297 and Lys332. Residues 401-466 (ESRLTGDGVG…TSATSRSPRK (66 aa)) form a tail region.

This sequence belongs to the intermediate filament family. In terms of assembly, heterotetramer of two type I and two type II keratins. Interacts with eukaryotic translation initiator factor 3 (eIF3) subunit EIF3S10. Interacts with GPER1. Post-translationally, arg-20 is dimethylated, probably to asymmetric dimethylarginine.

Its function is as follows. Blocks interferon-dependent interphase and stimulates DNA synthesis in cells. This chain is Keratin, type II cytoskeletal 7, found in Bos taurus (Bovine).